The following is a 687-amino-acid chain: Ribonuclease E (687 aa).

One can recognise an S1 motif domain in the interval glycine 35–arginine 117. The Mg(2+) site is built by aspartate 296 and aspartate 339. Zn(2+) contacts are provided by cysteine 397 and cysteine 400. Residues proline 650–serine 687 form a disordered region. Residues arginine 670–alanine 678 carry the C4 Arg-rich motif, necessary and sufficient to confer PNPase binding on another protein motif.

This sequence belongs to the RNase E/G family. As to quaternary structure, may form homodimers or higher order multimers. Interacts with polynucleotide phosphorylase (PNPase, pnp) via the C4 Arg-rich motif (residues 670-678). A homotetramer formed by a dimer of dimers. Mg(2+) serves as cofactor. Zn(2+) is required as a cofactor.

The protein resides in the cytoplasm. The catalysed reaction is Endonucleolytic cleavage of single-stranded RNA in A- and U-rich regions.. Functionally, endoribonuclease that plays a central role in rRNA and tRNA processing and mRNA decay. Has been shown to act on 9S rRNA (the precursor of 5S rRNA). This is Ribonuclease E from Nostoc sp. (strain PCC 7120 / SAG 25.82 / UTEX 2576).